The primary structure comprises 260 residues: Dehydrogenase/reductase SDR family member 4 (260 aa).

NADP(+) is bound at residue 14–38; that stretch reads IVTAATKGIGLAIAERLLDEGASVV. S148 contributes to the substrate binding site. The Proton acceptor role is filled by Y161. K165 contributes to the NADP(+) binding site.

This sequence belongs to the short-chain dehydrogenases/reductases (SDR) family.

The catalysed reaction is a secondary alcohol + NADP(+) = a ketone + NADPH + H(+). Its function is as follows. Catalyzes the reduction of isatin, 4-oxonon-2-enal, 9,10-phenanthrenequinone, menadione, 2,3-hexaenadione, 3,4-hexanedione and 2,3-heptanedione. The polypeptide is Dehydrogenase/reductase SDR family member 4 (Caenorhabditis elegans).